A 244-amino-acid polypeptide reads, in one-letter code: tRNA (guanine-N(1)-)-methyltransferase (244 aa).

S-adenosyl-L-methionine contacts are provided by residues Gly114 and 134–139; that span reads IGDYVL. Positions 220-244 are disordered; it reads RRPDLLEKAGASPGKSGSNFGKHDA.

This sequence belongs to the RNA methyltransferase TrmD family. As to quaternary structure, homodimer.

Its subcellular location is the cytoplasm. The enzyme catalyses guanosine(37) in tRNA + S-adenosyl-L-methionine = N(1)-methylguanosine(37) in tRNA + S-adenosyl-L-homocysteine + H(+). Its function is as follows. Specifically methylates guanosine-37 in various tRNAs. The polypeptide is tRNA (guanine-N(1)-)-methyltransferase (Rhizobium johnstonii (strain DSM 114642 / LMG 32736 / 3841) (Rhizobium leguminosarum bv. viciae)).